The following is a 305-amino-acid chain: Tyrosine recombinase XerC (305 aa).

A Core-binding (CB) domain is found at 4–95; it reads ISIQELIKQW…TVKNFYKFLE (92 aa). Residues 116–298 form the Tyr recombinase domain; sequence LLPKALSVDD…SIKHLEAVYN (183 aa). Residues R159, K182, H250, R253, and H276 contribute to the active site. Catalysis depends on Y285, which acts as the O-(3'-phospho-DNA)-tyrosine intermediate.

Belongs to the 'phage' integrase family. XerC subfamily. Forms a cyclic heterotetrameric complex composed of two molecules of XerC and two molecules of XerD.

It localises to the cytoplasm. Site-specific tyrosine recombinase, which acts by catalyzing the cutting and rejoining of the recombining DNA molecules. The XerC-XerD complex is essential to convert dimers of the bacterial chromosome into monomers to permit their segregation at cell division. It also contributes to the segregational stability of plasmids. This Rickettsia typhi (strain ATCC VR-144 / Wilmington) protein is Tyrosine recombinase XerC.